Here is a 95-residue protein sequence, read N- to C-terminus: Acylphosphatase 2 (95 aa).

Positions 6–93 constitute an Acylphosphatase-like domain; the sequence is RVIVTVQGRV…PLPPGFEVRP (88 aa). Active-site residues include Arg21 and Asn39.

This sequence belongs to the acylphosphatase family.

It catalyses the reaction an acyl phosphate + H2O = a carboxylate + phosphate + H(+). The protein is Acylphosphatase 2 (acyP2) of Ralstonia nicotianae (strain ATCC BAA-1114 / GMI1000) (Ralstonia solanacearum).